The sequence spans 265 residues: 4-hydroxy-tetrahydrodipicolinate reductase (265 aa).

NAD(+) contacts are provided by residues 7-12 (GASGRM) and aspartate 33. Arginine 34 contacts NADP(+). NAD(+) is bound by residues 96 to 98 (GTT) and 120 to 123 (ASNF). Histidine 153 (proton donor/acceptor) is an active-site residue. A (S)-2,3,4,5-tetrahydrodipicolinate-binding site is contributed by histidine 154. Lysine 157 serves as the catalytic Proton donor. 163-164 (GT) is a binding site for (S)-2,3,4,5-tetrahydrodipicolinate.

This sequence belongs to the DapB family.

The protein localises to the cytoplasm. It carries out the reaction (S)-2,3,4,5-tetrahydrodipicolinate + NAD(+) + H2O = (2S,4S)-4-hydroxy-2,3,4,5-tetrahydrodipicolinate + NADH + H(+). The catalysed reaction is (S)-2,3,4,5-tetrahydrodipicolinate + NADP(+) + H2O = (2S,4S)-4-hydroxy-2,3,4,5-tetrahydrodipicolinate + NADPH + H(+). The protein operates within amino-acid biosynthesis; L-lysine biosynthesis via DAP pathway; (S)-tetrahydrodipicolinate from L-aspartate: step 4/4. Its function is as follows. Catalyzes the conversion of 4-hydroxy-tetrahydrodipicolinate (HTPA) to tetrahydrodipicolinate. The protein is 4-hydroxy-tetrahydrodipicolinate reductase of Paraburkholderia phymatum (strain DSM 17167 / CIP 108236 / LMG 21445 / STM815) (Burkholderia phymatum).